A 67-amino-acid chain; its full sequence is MDARLLEILVCPICKGPLHYDRAAQELICNADKLAYPIRDGIPVMLVDEARQTVEGTPVDPAGPAGS.

The protein belongs to the UPF0434 family.

The polypeptide is UPF0434 protein Bcep1808_2639 (Burkholderia vietnamiensis (strain G4 / LMG 22486) (Burkholderia cepacia (strain R1808))).